We begin with the raw amino-acid sequence, 169 residues long: Histone H1.9 (169 aa).

Polar residues-rich tracts occupy residues 1-10 (MSLVSPSPDS) and 19-36 (DAST…IGPN). The segment at 1-36 (MSLVSPSPDSNAVMAGDQDASTSQVPSQSESKIGPN) is disordered. One can recognise an H15 domain in the interval 43-116 (RKPTMSKVIL…GASGSFRLGK (74 aa)). Phosphoserine is present on residues Ser62 and Ser65. Positions 118 to 142 (QAFKSKCKAKRRQRRQKPGQRRTGS) are enriched in basic residues. The disordered stretch occupies residues 118 to 154 (QAFKSKCKAKRRQRRQKPGQRRTGSRRSLLGSKKSNN).

Belongs to the histone H1/H5 family.

It is found in the nucleus. The protein resides in the chromosome. In terms of biological role, DNA-binding protein that may be implicated in chromatin remodeling and/or transcriptional regulation during spermiogenesis, the process of spermatid maturation into spermatozoa. The sequence is that of Histone H1.9 from Rattus norvegicus (Rat).